Consider the following 181-residue polypeptide: NAD(P)H-quinone oxidoreductase subunit I, chloroplastic (181 aa).

2 4Fe-4S ferredoxin-type domains span residues 52-81 (GRIH…VDWE) and 92-121 (KSYS…MTEE). Positions 61, 64, 67, 71, 101, 104, 107, and 111 each coordinate [4Fe-4S] cluster.

This sequence belongs to the complex I 23 kDa subunit family. NDH is composed of at least 16 different subunits, 5 of which are encoded in the nucleus. The cofactor is [4Fe-4S] cluster.

The protein localises to the plastid. The protein resides in the chloroplast thylakoid membrane. It catalyses the reaction a plastoquinone + NADH + (n+1) H(+)(in) = a plastoquinol + NAD(+) + n H(+)(out). It carries out the reaction a plastoquinone + NADPH + (n+1) H(+)(in) = a plastoquinol + NADP(+) + n H(+)(out). In terms of biological role, NDH shuttles electrons from NAD(P)H:plastoquinone, via FMN and iron-sulfur (Fe-S) centers, to quinones in the photosynthetic chain and possibly in a chloroplast respiratory chain. The immediate electron acceptor for the enzyme in this species is believed to be plastoquinone. Couples the redox reaction to proton translocation, and thus conserves the redox energy in a proton gradient. The protein is NAD(P)H-quinone oxidoreductase subunit I, chloroplastic of Zygnema circumcarinatum (Green alga).